A 549-amino-acid chain; its full sequence is Membrane protein insertase YidC (549 aa).

A helical membrane pass occupies residues 9-29 (LRLILAIALSFLFIALYSYFF). Positions 37-51 (TETTKQETTNNHTAT) are enriched in low complexity. The tract at residues 37 to 56 (TETTKQETTNNHTATSPTAS) is disordered. The next 5 helical transmembrane spans lie at 328-348 (VIEY…LDYL), 351-371 (FVGN…IILY), 417-437 (GANP…FFAI), 452-472 (WVLW…PLLM), and 498-518 (LLPL…VLYW).

The protein belongs to the OXA1/ALB3/YidC family. Type 1 subfamily. In terms of assembly, interacts with the Sec translocase complex via SecD. Specifically interacts with transmembrane segments of nascent integral membrane proteins during membrane integration.

Its subcellular location is the cell inner membrane. Functionally, required for the insertion and/or proper folding and/or complex formation of integral membrane proteins into the membrane. Involved in integration of membrane proteins that insert both dependently and independently of the Sec translocase complex, as well as at least some lipoproteins. Aids folding of multispanning membrane proteins. The protein is Membrane protein insertase YidC of Helicobacter pylori (strain J99 / ATCC 700824) (Campylobacter pylori J99).